Reading from the N-terminus, the 99-residue chain is Sperm protein associated with the nucleus on the X chromosome N4 (99 aa).

Polar residues predominate over residues 1-10; the sequence is MEEPTSSTNE. The tract at residues 1-99 is disordered; sequence MEEPTSSTNE…AGSPQDGGQN (99 aa). Residues 11 to 22 are compositionally biased toward basic and acidic residues; the sequence is NKMKSPCESNKR. Residues 23 to 32 are compositionally biased toward basic residues; the sequence is KVDKKKKNLH. The span at 64–78 shows a compositional bias: polar residues; it reads SNQLENNQPTESSTD.

It belongs to the SPAN-X family.

In Homo sapiens (Human), this protein is Sperm protein associated with the nucleus on the X chromosome N4 (SPANXN4).